The sequence spans 364 residues: Protein leg1a (364 aa).

The N-terminal stretch at 1–22 (MSEMGFLRSVAAVLLLAVFSHA) is a signal peptide. Asparagine 70 is a glycosylation site (N-linked (GlcNAc...) asparagine).

Belongs to the LEG1 family. In terms of tissue distribution, detected in all tissues tested, with the highest levels in serum (at protein level). At mRNA level, only expressed in liver.

Its subcellular location is the secreted. Important for early development of liver, exocrine pancreas and intestine, probably through cell cycle regulation. In liver, its function is partially redundant with leg1b function. The polypeptide is Protein leg1a (Danio rerio (Zebrafish)).